A 231-amino-acid chain; its full sequence is MESSGKMESGAGQQPQPPQPFLPPAACFFATAAAAAAAAAAAAQSAQQQQPQAPPQQAPQLSPVADSQPSGGGHKSAAKQVKRQRSSSPELMRCKRRLNFSGFGYSLPQQQPAAVARRNERERNRVKLVNLGFATLREHVPNGAANKKMSKVETLRSAVEYIRALQQLLDEHDAVSAAFQAGVLSPTISPNYSNDLNSMAGSPVSSYSSDEGSYDPLSPEEQELLDFTNWF.

2 disordered regions span residues Met-1–Pro-24 and Ala-39–Met-92. The span at Ala-39–Pro-51 shows a compositional bias: low complexity. The span at Ser-76 to Arg-85 shows a compositional bias: basic residues. Residues Ala-113–Leu-165 enclose the bHLH domain. The residue at position 151 (Lys-151) is an N6-acetyllysine.

In terms of assembly, efficient DNA binding requires dimerization with another bHLH protein. Forms a heterodimer with TCF3. As to expression, developing CNS and PNS at embryonic and postnatal stages. Expressed in the epithelium of glandular stomach.

It localises to the nucleus. Its function is as follows. Transcription factor that plays a key role in neuronal differentiation: acts as a pioneer transcription factor, accessing closed chromatin to allow other factors to bind and activate neural pathways. Directly binds the E box motif (5'-CANNTG-3') on promoters and promotes transcription of neuronal genes. The combination of three transcription factors, ASCL1, POU3F2/BRN2 and MYT1L, is sufficient to reprogram fibroblasts and other somatic cells into induced neuronal (iN) cells in vitro. Plays a role at early stages of development of specific neural lineages in most regions of the CNS, and of several lineages in the PNS. Essential for the generation of olfactory and autonomic neurons. Acts synergistically with FOXN4 to specify the identity of V2b neurons rather than V2a from bipotential p2 progenitors during spinal cord neurogenesis, probably through DLL4-NOTCH signaling activation. Involved in the regulation of neuroendocrine cell development in the glandular stomach. The protein is Achaete-scute homolog 1 of Mus musculus (Mouse).